The following is a 270-amino-acid chain: Molybdenum storage protein subunit beta (270 aa).

In terms of assembly, octamer consisting of 4 alpha and 4 beta chains.

The protein localises to the cytoplasm. Its function is as follows. Intracellular storage of molybdenum. Binds polyoxomolybdates. Can bind at least 90 molybdenum atoms per protein molecule. This Azotobacter vinelandii (strain DJ / ATCC BAA-1303) protein is Molybdenum storage protein subunit beta.